A 270-amino-acid chain; its full sequence is MIASSAKIHPSSAIEGGAVIGENVKIGPFCHIGPNVVLADEVEILSHVTVIGRTTVGKGTKIFPGAVIGGDSQSMHHSALNTTLVIGENCTIREGVTMNTGTVEHGGATIVGDNNLFLAYSHVAHDCRLGNNIILSNNVMLAGHVTVADRAILGGGSAVHQFTRIGRQAFIGGLSAVSYDVIPYGMLNGNPGLLSGLNVVGMTRAGFDRSTIHRVRRCYKQIFEGDGSIRANAAAIRDEYLDCAPALEILDFIAAESDRALSSPNRGAKG.

This sequence belongs to the transferase hexapeptide repeat family. LpxA subfamily. As to quaternary structure, homotrimer.

It localises to the cytoplasm. It catalyses the reaction a (3R)-hydroxyacyl-[ACP] + UDP-N-acetyl-alpha-D-glucosamine = a UDP-3-O-[(3R)-3-hydroxyacyl]-N-acetyl-alpha-D-glucosamine + holo-[ACP]. The protein operates within glycolipid biosynthesis; lipid IV(A) biosynthesis; lipid IV(A) from (3R)-3-hydroxytetradecanoyl-[acyl-carrier-protein] and UDP-N-acetyl-alpha-D-glucosamine: step 1/6. Involved in the biosynthesis of lipid A, a phosphorylated glycolipid that anchors the lipopolysaccharide to the outer membrane of the cell. The sequence is that of Acyl-[acyl-carrier-protein]--UDP-N-acetylglucosamine O-acyltransferase from Sinorhizobium medicae (strain WSM419) (Ensifer medicae).